The primary structure comprises 166 residues: Lipoprotein signal peptidase (166 aa).

3 consecutive transmembrane segments (helical) span residues 10–30, 68–88, and 94–114; these read LIWL…KAWV, WQLW…AFWL, and GHWR…GNVI. Active-site residues include D124 and D142. The chain crosses the membrane as a helical span at residues 138 to 158; the sequence is FNIADSAIVGGAIGIAVFGLF.

The protein belongs to the peptidase A8 family.

It is found in the cell inner membrane. The catalysed reaction is Release of signal peptides from bacterial membrane prolipoproteins. Hydrolyzes -Xaa-Yaa-Zaa-|-(S,diacylglyceryl)Cys-, in which Xaa is hydrophobic (preferably Leu), and Yaa (Ala or Ser) and Zaa (Gly or Ala) have small, neutral side chains.. It participates in protein modification; lipoprotein biosynthesis (signal peptide cleavage). This protein specifically catalyzes the removal of signal peptides from prolipoproteins. This Xanthomonas oryzae pv. oryzae (strain MAFF 311018) protein is Lipoprotein signal peptidase.